Reading from the N-terminus, the 392-residue chain is 8-amino-7-oxononanoate synthase 1 (392 aa).

Residue 109-110 coordinates pyridoxal 5'-phosphate; sequence GF. His-134 is a binding site for substrate. Pyridoxal 5'-phosphate-binding positions include Ser-181, 206 to 209, and 237 to 240; these read DDAH and TLSK. Lys-240 carries the post-translational modification N6-(pyridoxal phosphate)lysine. Thr-354 provides a ligand contact to substrate.

It belongs to the class-II pyridoxal-phosphate-dependent aminotransferase family. BioF subfamily. Homodimer. Pyridoxal 5'-phosphate is required as a cofactor.

The catalysed reaction is 6-carboxyhexanoyl-[ACP] + L-alanine + H(+) = (8S)-8-amino-7-oxononanoate + holo-[ACP] + CO2. Its pathway is cofactor biosynthesis; biotin biosynthesis. In terms of biological role, catalyzes the decarboxylative condensation of pimeloyl-[acyl-carrier protein] and L-alanine to produce 8-amino-7-oxononanoate (AON), [acyl-carrier protein], and carbon dioxide. This Bacillus subtilis (strain 168) protein is 8-amino-7-oxononanoate synthase 1 (kbl).